Consider the following 94-residue polypeptide: Small ubiquitin-related modifier 3-like (94 aa).

Lysine 11 is covalently cross-linked (Glycyl lysine isopeptide (Lys-Gly) (interchain with G-Cter in SUMO)). Residues 15 to 92 (DHINLKVAGQ…IDVFQQQTGG (78 aa)) form the Ubiquitin-like domain. Residue glycine 92 forms a Glycyl lysine isopeptide (Gly-Lys) (interchain with K-? in acceptor proteins) linkage. Residues 93–94 (SC) constitute a propeptide that is removed on maturation.

It belongs to the ubiquitin family. SUMO subfamily. In terms of assembly, interacts with sae2 and ube2i. Covalently attached to a number of proteins. Post-translationally, polymeric chains can be formed through Lys-11 cross-linking. In terms of processing, cleavage of precursor form by a sentrin-specific protease is necessary for function.

The protein localises to the cytoplasm. The protein resides in the nucleus. It is found in the PML body. Its function is as follows. Ubiquitin-like protein which can be covalently attached to target lysines either as a monomer or as a lysine-linked polymer. Does not seem to be involved in protein degradation and may function as an antagonist of ubiquitin in the degradation process. Plays a role in a number of cellular processes such as nuclear transport, DNA replication and repair, mitosis and signal transduction. Covalent attachment to its substrates requires prior activation by the E1 complex sae1-sae2 and linkage to the E2 enzyme ube2i. The sequence is that of Small ubiquitin-related modifier 3-like (sumo3l) from Danio rerio (Zebrafish).